The sequence spans 364 residues: Histidinol-phosphate aminotransferase 2 (364 aa).

N6-(pyridoxal phosphate)lysine is present on Lys223.

The protein belongs to the class-II pyridoxal-phosphate-dependent aminotransferase family. Histidinol-phosphate aminotransferase subfamily. In terms of assembly, homodimer. Pyridoxal 5'-phosphate serves as cofactor.

The catalysed reaction is L-histidinol phosphate + 2-oxoglutarate = 3-(imidazol-4-yl)-2-oxopropyl phosphate + L-glutamate. Its pathway is amino-acid biosynthesis; L-histidine biosynthesis; L-histidine from 5-phospho-alpha-D-ribose 1-diphosphate: step 7/9. The polypeptide is Histidinol-phosphate aminotransferase 2 (hisC2) (Oceanobacillus iheyensis (strain DSM 14371 / CIP 107618 / JCM 11309 / KCTC 3954 / HTE831)).